The following is a 156-amino-acid chain: Cyanate hydratase (156 aa).

Active-site residues include Arg96, Glu99, and Ser122.

The protein belongs to the cyanase family.

It carries out the reaction cyanate + hydrogencarbonate + 3 H(+) = NH4(+) + 2 CO2. In terms of biological role, catalyzes the reaction of cyanate with bicarbonate to produce ammonia and carbon dioxide. This is Cyanate hydratase from Pseudomonas fluorescens (strain ATCC BAA-477 / NRRL B-23932 / Pf-5).